The chain runs to 201 residues: Recombination protein RecR (201 aa).

The segment at 60 to 75 (CSCCGNVDTSDPCTIC) adopts a C4-type zinc-finger fold. Residues 83 to 178 (ATLIVVEDVS…RVTRLAHGVP (96 aa)) enclose the Toprim domain.

The protein belongs to the RecR family.

Its function is as follows. May play a role in DNA repair. It seems to be involved in an RecBC-independent recombinational process of DNA repair. It may act with RecF and RecO. The chain is Recombination protein RecR from Brucella melitensis biotype 2 (strain ATCC 23457).